Reading from the N-terminus, the 389-residue chain is 26S proteasome non-ATPase regulatory subunit 6 (389 aa).

A PCI domain is found at 193–361 (DFKQAAELFL…EIVETNRPDS (169 aa)).

The protein belongs to the proteasome subunit S10 family. In terms of assembly, component of the 19S proteasome regulatory particle complex. The 26S proteasome consists of a 20S core particle (CP) and two 19S regulatory subunits (RP). The regulatory particle is made of a lid composed of 9 subunits including PSMD6, a base containing 6 ATPases and few additional components.

Functionally, component of the 26S proteasome, a multiprotein complex involved in the ATP-dependent degradation of ubiquitinated proteins. This complex plays a key role in the maintenance of protein homeostasis by removing misfolded or damaged proteins, which could impair cellular functions, and by removing proteins whose functions are no longer required. Therefore, the proteasome participates in numerous cellular processes, including cell cycle progression, apoptosis, or DNA damage repair. The sequence is that of 26S proteasome non-ATPase regulatory subunit 6 (PSMD6) from Homo sapiens (Human).